Reading from the N-terminus, the 2357-residue chain is Protein transport protein Sec16A (2357 aa).

Disordered regions lie at residues methionine 1–histidine 225, glutamine 240–proline 347, serine 394–threonine 463, tyrosine 504–glutamine 562, aspartate 579–asparagine 630, lysine 666–glutamate 689, threonine 714–lysine 739, serine 778–valine 820, valine 917–alanine 1008, proline 1023–glutamine 1055, and glutamine 1076–arginine 1151. 2 stretches are compositionally biased toward polar residues: residues asparagine 57–proline 75 and threonine 94–glycine 104. Positions methionine 208–proline 221 are enriched in low complexity. Residues valine 281–leucine 290 are compositionally biased toward polar residues. Serine 311 is subject to Phosphoserine. Over residues proline 333–asparagine 342 the composition is skewed to polar residues. A compositionally biased stretch (low complexity) spans proline 540–proline 561. Serine 581, serine 591, serine 609, serine 611, and serine 614 each carry phosphoserine. Polar residues predominate over residues serine 581–serine 590. Threonine 615 is subject to Phosphothreonine. Serine 617 bears the Phosphoserine mark. Polar residues-rich tracts occupy residues serine 921–glutamine 959, phenylalanine 972–asparagine 997, and proline 1029–leucine 1041. Positions serine 1037–glycine 1905 are required for localization to endoplasmic reticulum exit sites. At serine 1087 the chain carries Phosphoserine. The tract at residues alanine 1118–histidine 1415 is interaction with MIA3. Positions serine 1119 to tyrosine 1420 are required for endoplasmic reticulum localization. A compositionally biased stretch (low complexity) spans glutamine 1134–valine 1150. The residue at position 1223 (serine 1223) is a Phosphoserine. Positions alanine 1226–glycine 1253 are disordered. Residues glutamate 1227–serine 1238 show a composition bias toward basic and acidic residues. Position 1245 is a phosphoserine (serine 1245). Residue threonine 1340 is modified to Phosphothreonine. Serine 1342, serine 1362, serine 1365, serine 1371, serine 1374, serine 1377, serine 1384, serine 1588, and serine 1616 each carry phosphoserine. Residues aspartate 1344–tyrosine 1395 are disordered. The segment covering glutamate 1348–alanine 1369 has biased composition (basic and acidic residues). Positions serine 1371–serine 1392 are enriched in low complexity. The segment at glutamine 1449–glycine 1905 is central conserved domain (CCD); mediates interaction with RNF183, LRRK2 and SEC13. The segment at valine 1907–alanine 1943 is disordered. Polar residues predominate over residues leucine 1908–valine 1927. Threonine 1922 carries the phosphothreonine modification. Serine 1951, serine 2043, serine 2063, serine 2077, and serine 2094 each carry phosphoserine. Disordered regions lie at residues glutamate 1993–alanine 2141, lysine 2156–serine 2198, and proline 2240–asparagine 2357. Residues glycine 2092–aspartate 2105 show a composition bias toward polar residues. Basic and acidic residues predominate over residues serine 2106–glutamate 2126. The tract at residues glutamate 2126–asparagine 2357 is required for interaction with SEC23A. Serine 2291 is modified (phosphoserine). Positions glutamine 2332–serine 2343 are enriched in polar residues.

This sequence belongs to the SEC16 family. SEC16A and SEC16B are each present in multiple copies in a heteromeric complex. Interacts with SEC23A. Interacts with RNF183, RNF152, MIA3 and SEC13. Interacts with GORASP2 in response to ER stress. Interacts with LRRK2 (via ROC domain). Interacts with RAB10.

The protein resides in the endoplasmic reticulum membrane. It localises to the golgi apparatus membrane. Its subcellular location is the cytoplasm. It is found in the perinuclear region. The protein localises to the cytosol. The protein resides in the microsome membrane. Functionally, acts as a molecular scaffold that plays a key role in the organization of the endoplasmic reticulum exit sites (ERES), also known as transitional endoplasmic reticulum (tER). SAR1A-GTP-dependent assembly of SEC16A on the ER membrane forms an organized scaffold defining an ERES. Required for secretory cargo traffic from the endoplasmic reticulum to the Golgi apparatus. Mediates the recruitment of MIA3/TANGO to ERES. Regulates both conventional (ER/Golgi-dependent) and GORASP2-mediated unconventional (ER/Golgi-independent) trafficking of CFTR to cell membrane. Acts as a RAB10 effector in the regulation of insulin-induced SLC2A4/GLUT4 glucose transporter-enriched vesicles delivery to the plasma membrane in adipocytes. This Mus musculus (Mouse) protein is Protein transport protein Sec16A (Sec16a).